The sequence spans 338 residues: MTTLRLLISDSYDPWFNLAVEECIFRQMPATQRVLFLWRNADTVVIGRAQNPWKECNTRRMEEDNVRLARRSSGGGAVFHDLGNTCFTFMAGKPEYDKTISTHIVLAALNSLGVMADASGRNDLVVKTPDGDRKVSGSAYRETKDRGFHHGTLLLNADLSRLANYLNPDKKKLAAKGITSVRSRVANLTELLPGITHEQVCQAVTEAFFAHYGERIDAEVISPDKTPDLPNFTETFARQSSWEWNFGQAPAFSHLLDERFTWGGVELHFDVEKGVITRAQAFTDSLNPAPLEALAGRLQGCQYRADKLQETCEALIATFPEQESELRELANWVAGAVR.

Residues 29-216 (PATQRVLFLW…AFFAHYGERI (188 aa)) form the BPL/LPL catalytic domain. Residues Arg-71, 76–79 (GAVF), and Lys-134 contribute to the ATP site. Lys-134 contributes to the (R)-lipoate binding site.

Belongs to the LplA family. As to quaternary structure, monomer.

It localises to the cytoplasm. It catalyses the reaction L-lysyl-[lipoyl-carrier protein] + (R)-lipoate + ATP = N(6)-[(R)-lipoyl]-L-lysyl-[lipoyl-carrier protein] + AMP + diphosphate + H(+). The protein operates within protein modification; protein lipoylation via exogenous pathway; protein N(6)-(lipoyl)lysine from lipoate: step 1/2. It participates in protein modification; protein lipoylation via exogenous pathway; protein N(6)-(lipoyl)lysine from lipoate: step 2/2. In terms of biological role, catalyzes both the ATP-dependent activation of exogenously supplied lipoate to lipoyl-AMP and the transfer of the activated lipoyl onto the lipoyl domains of lipoate-dependent enzymes. This Salmonella typhi protein is Lipoate-protein ligase A.